The chain runs to 461 residues: GTPase Der (461 aa).

2 consecutive EngA-type G domains span residues 3–167 and 190–371; these read PQVI…GEKQ and LKLA…AAWS. GTP is bound by residues 9–16, 56–60, 119–122, 196–203, 249–253, and 314–317; these read GRPNVGKS, DTAGW, NKAE, GRPNAGKS, DTAGM, and NKWD. Residues 372–456 enclose the KH-like domain; sequence KRVPTAALNR…PIRLTLRSPK (85 aa).

Belongs to the TRAFAC class TrmE-Era-EngA-EngB-Septin-like GTPase superfamily. EngA (Der) GTPase family. As to quaternary structure, associates with the 50S ribosomal subunit.

GTPase that plays an essential role in the late steps of ribosome biogenesis. This is GTPase Der from Novosphingobium aromaticivorans (strain ATCC 700278 / DSM 12444 / CCUG 56034 / CIP 105152 / NBRC 16084 / F199).